A 423-amino-acid chain; its full sequence is UDP-N-acetylglucosamine 1-carboxyvinyltransferase 2 (423 aa).

Phosphoenolpyruvate is bound at residue 23–24 (KN). Arg93 is a binding site for UDP-N-acetyl-alpha-D-glucosamine. Cys117 (proton donor) is an active-site residue. A 2-(S-cysteinyl)pyruvic acid O-phosphothioketal modification is found at Cys117. Residues 122-126 (RPIDQ), Asp305, and Ile327 each bind UDP-N-acetyl-alpha-D-glucosamine.

The protein belongs to the EPSP synthase family. MurA subfamily.

Its subcellular location is the cytoplasm. The catalysed reaction is phosphoenolpyruvate + UDP-N-acetyl-alpha-D-glucosamine = UDP-N-acetyl-3-O-(1-carboxyvinyl)-alpha-D-glucosamine + phosphate. It functions in the pathway cell wall biogenesis; peptidoglycan biosynthesis. In terms of biological role, cell wall formation. Adds enolpyruvyl to UDP-N-acetylglucosamine. The polypeptide is UDP-N-acetylglucosamine 1-carboxyvinyltransferase 2 (Listeria monocytogenes serovar 1/2a (strain ATCC BAA-679 / EGD-e)).